The following is a 100-amino-acid chain: NADH-quinone oxidoreductase subunit K 2 (100 aa).

Helical transmembrane passes span 4-24 (LWWS…GVLL), 28-48 (ILIV…NFIA), and 60-80 (IFAI…LGIL).

The protein belongs to the complex I subunit 4L family. In terms of assembly, NDH-1 is composed of 14 different subunits. Subunits NuoA, H, J, K, L, M, N constitute the membrane sector of the complex.

It localises to the cell inner membrane. The catalysed reaction is a quinone + NADH + 5 H(+)(in) = a quinol + NAD(+) + 4 H(+)(out). Its function is as follows. NDH-1 shuttles electrons from NADH, via FMN and iron-sulfur (Fe-S) centers, to quinones in the respiratory chain. The immediate electron acceptor for the enzyme in this species is believed to be ubiquinone. Couples the redox reaction to proton translocation (for every two electrons transferred, four hydrogen ions are translocated across the cytoplasmic membrane), and thus conserves the redox energy in a proton gradient. This is NADH-quinone oxidoreductase subunit K 2 from Rhizobium meliloti (strain 1021) (Ensifer meliloti).